We begin with the raw amino-acid sequence, 128 residues long: Head peptide (128 aa).

Positions 1–22 are cleaved as a signal peptide; the sequence is MWKFASIVVLVVCLAWAVYCED. Residue Q23 is modified to Pyrrolidone carboxylic acid. P26 carries the post-translational modification Hydroxyproline; partial. The segment at 27–128 is disordered; the sequence is SLKTRFGRSA…GRANKKRAAN (102 aa). F32 is modified (phenylalanine amide). Positions 35 to 55 are excised as a propeptide; that stretch reads SADEPESDNYVSNDIMEKRSA. At Q56 the chain carries Pyrrolidone carboxylic acid. P59 bears the Hydroxyproline; partial mark. Phenylalanine amide is present on F65. A compositionally biased stretch (basic and acidic residues) spans 66–78; it reads GRSEGAEVMEKRS. Positions 68–79 are excised as a propeptide; that stretch reads SEGAEVMEKRSA. The residue at position 80 (Q80) is a Pyrrolidone carboxylic acid. Hydroxyproline; partial is present on P83. F89 is modified (phenylalanine amide). Positions 92–128 are excised as a propeptide; that stretch reads SVANPESDGYMRKRSAESEPFVTRIRHGRANKKRAAN. Basic residues predominate over residues 115-128; sequence RIRHGRANKKRAAN.

The protein belongs to the NPY family. Expressed in the brain, terminal ganglion, and midgut of adults: numerous neurosecretory cells and midgut endocrine cells. Expression is dynamic depending on reproductive cycle.

It is found in the secreted. Functionally, has a role in inhibiting host-seeking behavior during a reproductive cycle. This chain is Head peptide, found in Aedes aegypti (Yellowfever mosquito).